The primary structure comprises 485 residues: Cys-Gly metallodipeptidase DUG1 (485 aa).

H109 is a binding site for Zn(2+). Residue D111 is part of the active site. D144 provides a ligand contact to Zn(2+). E178 acts as the Proton acceptor in catalysis. E179, D207, and H457 together coordinate Zn(2+).

This sequence belongs to the peptidase M20A family. As to quaternary structure, homodimer. Component of the GSH degradosomal complex. It depends on Zn(2+) as a cofactor. The cofactor is Mn(2+).

It is found in the cytoplasm. Its function is as follows. Catalytic component of the GSH degradosomal complex involved in the degradation of glutathione (GSH) and other peptides containing a gamma-glu-X bond. Also functions as a dipeptidase with high specificity for Cys-Gly and no activity toward tri- or tetrapeptides. The polypeptide is Cys-Gly metallodipeptidase DUG1 (DUG1) (Candida albicans (strain SC5314 / ATCC MYA-2876) (Yeast)).